A 692-amino-acid chain; its full sequence is Methionine--tRNA ligase (692 aa).

The short motif at 12–22 (PYANGSFHIGH) is the 'HIGH' region element. The Zn(2+) site is built by Cys-143, Cys-146, Cys-156, and Cys-159. The 'KMSKS' region motif lies at 341–345 (KMSKS). Lys-344 is a binding site for ATP. The region spanning 586–692 (DFAKIDLRIA…PGAQPGMRVR (107 aa)) is the tRNA-binding domain.

This sequence belongs to the class-I aminoacyl-tRNA synthetase family. MetG type 1 subfamily. Homodimer. It depends on Zn(2+) as a cofactor.

It localises to the cytoplasm. The enzyme catalyses tRNA(Met) + L-methionine + ATP = L-methionyl-tRNA(Met) + AMP + diphosphate. Is required not only for elongation of protein synthesis but also for the initiation of all mRNA translation through initiator tRNA(fMet) aminoacylation. In Bordetella parapertussis (strain 12822 / ATCC BAA-587 / NCTC 13253), this protein is Methionine--tRNA ligase.